A 443-amino-acid chain; its full sequence is Glutamate-1-semialdehyde 2,1-aminomutase (443 aa).

N6-(pyridoxal phosphate)lysine is present on Lys277.

Belongs to the class-III pyridoxal-phosphate-dependent aminotransferase family. HemL subfamily. As to quaternary structure, homodimer. Pyridoxal 5'-phosphate is required as a cofactor.

It localises to the cytoplasm. The enzyme catalyses (S)-4-amino-5-oxopentanoate = 5-aminolevulinate. Its pathway is porphyrin-containing compound metabolism; protoporphyrin-IX biosynthesis; 5-aminolevulinate from L-glutamyl-tRNA(Glu): step 2/2. The polypeptide is Glutamate-1-semialdehyde 2,1-aminomutase (Pseudarthrobacter chlorophenolicus (strain ATCC 700700 / DSM 12829 / CIP 107037 / JCM 12360 / KCTC 9906 / NCIMB 13794 / A6) (Arthrobacter chlorophenolicus)).